The sequence spans 436 residues: Cholecystokinin receptor type A (436 aa).

At 1-41 (MDVVDSLLMNGSNITPPCELGLENETLFCLDQPQPSKEWQS) the chain is on the extracellular side. N-linked (GlcNAc...) asparagine glycosylation is found at Asn10 and Asn24. Cys18 and Cys29 form a disulfide bridge. The helical transmembrane segment at 42 to 67 (AVQILLYSFIFLLSVLGNTLVITVLI) threads the bilayer. Over 68–77 (RNKRMRTVTN) the chain is Cytoplasmic. Residues 78-104 (IFLLSLAVSDLMLCLFCMPFNLIPNLL) form a helical membrane-spanning segment. The Extracellular portion of the chain corresponds to 105 to 115 (KDFIFGSAVCK). Cys114 and Cys196 are disulfide-bonded. A helical membrane pass occupies residues 116 to 137 (TTTYFMGTSVSVSTFNLVAISL). The Cytoplasmic portion of the chain corresponds to 138-157 (ERYGAICRPLQSRVWQTKSH). The chain crosses the membrane as a helical span at residues 158 to 178 (ALKVIAATWCLSFTIMTPYPI). The Extracellular portion of the chain corresponds to 179–210 (YSNLVPFTKNNNQTANMCRFLLPSDAMQQSWQ). Asn190 carries an N-linked (GlcNAc...) asparagine glycan. The chain crosses the membrane as a helical span at residues 211–234 (TFLLLILFLIPGVVMVVAYGLISL). The Cytoplasmic segment spans residues 235-321 (ELYQGIKFDA…NLIAKKRVIR (87 aa)). A disordered region spans residues 252 to 280 (EKRLSSGGGGGGGSSSSRYEDSDGCYLQK). Residues 322 to 342 (MLIVIVVLFFLCWMPIFSANA) traverse the membrane as a helical segment. At 343–357 (WRAYDTVSAEKHLSG) the chain is on the extracellular side. Residues 358 to 381 (TPISFILLLSYTSSCVNPIIYCFM) form a helical membrane-spanning segment. The Cytoplasmic segment spans residues 382–436 (NKRFRLGFMATFPCCPNPGPTGVRGEVGEEEDGRTIRASLSRYSYSHMSTSAPPH). Cys395 carries the S-palmitoyl cysteine lipid modification.

Belongs to the G-protein coupled receptor 1 family.

It is found in the cell membrane. Receptor for cholecystokinin. Mediates pancreatic growth and enzyme secretion, smooth muscle contraction of the gall bladder and stomach. Has a 1000-fold higher affinity for CCK rather than for gastrin. It modulates feeding and dopamine-induced behavior in the central and peripheral nervous system. This receptor mediates its action by association with G proteins that activate a phosphatidylinositol-calcium second messenger system. The sequence is that of Cholecystokinin receptor type A (Cckar) from Mus musculus (Mouse).